The sequence spans 84 residues: Esculentin-1SIa (84 aa).

A signal peptide spans 1–22; it reads MFTLKKPLLLIVLLGIISLSLC. A propeptide spans 23–36 (removed in mature form); it reads EQERAADEDEGSEI. A disulfide bridge links Cys-78 with Cys-84.

Expressed by the skin glands.

The protein resides in the secreted. Has antimicrobial activity against Gram-negative bacterium E.coli ATCC 8739 (MIC=6.3 ug), against Gram positive bacteria S.aureus ATCC 6538 (MIC=3.1 ug), methicillin-resistant S.aureus ATCC 43300 (MIC=25 ug) and B.subtilis ATCC 6633 (MIC=25 ug). Has no activity against fungus C.albicans ATCC 90028. In Odorrana ishikawae (Ishikawa's frog), this protein is Esculentin-1SIa.